Consider the following 134-residue polypeptide: Transmembrane protein 100 (134 aa).

The disordered stretch occupies residues 1-23 (MTEESTKENLGAPKSPTPVTMEK). Position 15 is a phosphoserine (Ser-15). Helical transmembrane passes span 56–76 (CIIP…AVAY) and 84–104 (IISI…ASSA). Ser-121 is modified (phosphoserine).

As to quaternary structure, interacts (via C-terminus) with TRPA1 and TRPV1. Interacts with TASOR. As to expression, expressed in dorsal root ganglia. Expressed in neurons as well as nerve fiber bundles connecting ganglia and fibers innervating muscle layer of the gastric body, jejunum, and proximal colon. Expressed in arterial endothelial cells and neurons of the central nervous system and peripheral nervous system (at protein level). Expressed strongly in lung, weakly in brain, heart and muscle. Expressed in enteric neurons and vascular tissue in the muscularis propria of the gastrointestinal tract.

It is found in the cell membrane. It localises to the membrane. The protein localises to the perikaryon. The protein resides in the cytoplasm. Its subcellular location is the perinuclear region. It is found in the endoplasmic reticulum. Functionally, plays a role during embryonic arterial endothelium differentiation and vascular morphogenesis through the ACVRL1 receptor-dependent signaling pathway upon stimulation by bone morphogenetic proteins, such as GDF2/BMP9 and BMP10. Involved in the regulation of nociception, acting as a modulator of the interaction between TRPA1 and TRPV1, two molecular sensors and mediators of pain signals in dorsal root ganglia (DRG) neurons. Mechanistically, it weakens their interaction, thereby releasing the inhibition of TRPA1 by TRPV1 and increasing the single-channel open probability of the TRPA1-TRPV1 complex. In Mus musculus (Mouse), this protein is Transmembrane protein 100 (Tmem100).